The following is a 424-amino-acid chain: Probable ribonuclease FAU-1 (424 aa).

This sequence belongs to the FAU-1 family.

In terms of biological role, probable RNase involved in rRNA stability through maturation and/or degradation of precursor rRNAs. Binds to RNA in loop regions with AU-rich sequences. This Saccharolobus solfataricus (strain ATCC 35092 / DSM 1617 / JCM 11322 / P2) (Sulfolobus solfataricus) protein is Probable ribonuclease FAU-1.